Here is a 253-residue protein sequence, read N- to C-terminus: Kallikrein-7 (253 aa).

Positions 1-22 are cleaved as a signal peptide; that stretch reads MARSLLLPLQILLLSLALETAG. Positions 23–29 are cleaved as a propeptide — activation peptide; it reads EEAQGDK. The 221-residue stretch at 30 to 250 folds into the Peptidase S1 domain; that stretch reads IIDGAPCARG…FTKWINDTMK (221 aa). Intrachain disulfides connect cysteine 36–cysteine 165, cysteine 55–cysteine 71, cysteine 137–cysteine 239, cysteine 144–cysteine 211, cysteine 176–cysteine 190, and cysteine 201–cysteine 226. Catalysis depends on charge relay system residues histidine 70 and aspartate 112. The active-site Charge relay system is the serine 205. Asparagine 246 carries N-linked (GlcNAc...) asparagine glycosylation.

Belongs to the peptidase S1 family. Kallikrein subfamily. In terms of tissue distribution, abundantly expressed in the skin and is expressed by keratinocytes in the epidermis. Also expressed in the brain, mammary gland, cerebellum, spinal cord and kidney. Lower levels in salivary glands, uterus, thymus, thyroid, placenta, trachea and testis. Up-regulated in ovarian carcinoma, especially late-stage serous carcinoma, compared with normal ovaries and benign adenomas (at protein level).

It is found in the secreted. The catalysed reaction is Cleavage of proteins with aromatic side chains in the P1 position.. Its activity is regulated as follows. Inhibited by Zn2+ and Cu2+ at low micromolar concentrations. Inhibited by SERPINA12. May catalyze the degradation of intercellular cohesive structures in the cornified layer of the skin in the continuous shedding of cells from the skin surface. Specific for amino acid residues with aromatic side chains in the P1 position. Cleaves insulin A chain at '14-Tyr-|-Gln-15' and insulin B chain at '6-Leu-|-Cys-7', '16-Tyr-|-Leu-17', '25-Phe-|-Tyr-26' and '26-Tyr-|-Thr-27'. Could play a role in the activation of precursors to inflammatory cytokines. The protein is Kallikrein-7 (KLK7) of Homo sapiens (Human).